Consider the following 182-residue polypeptide: MSNGTDQAQPPPENPATPVDSKSRKRATPGDDNWLPPDWRTEIRVRTSGTKAGTVDKFYYEPITGRKFRSKNEVLYYLEHGTPKKKSVKTAENGDSHSEHSEGRGSARRQTKSNKKVTEPPPKPLNFDFLNVPEKVTWTGINGSEEAWLPFIGDYKIQESVSQDWDRVFTLVTSQNAGKTMF.

Disordered stretches follow at residues methionine 1–aspartate 56 and histidine 80–asparagine 126. One can recognise an MBD domain in the interval lysine 25–serine 101. The segment covering glutamate 92–glycine 105 has biased composition (basic and acidic residues). A compositionally biased stretch (basic residues) spans serine 106–lysine 115.

In terms of assembly, homodimer and heterodimer with MBD6. Interacts with DDM1 via its MBD domain. As to expression, mostly expressed in flowers, and, to a lower extent, in seedlings, buds, stems and mature seeds, but barely in roots, exclusively in root meristem cells at tips (at protein level).

Its subcellular location is the nucleus. The protein localises to the chromosome. Transcriptional regulator that binds CpG islands in promoters where the DNA is methylated at position 5 of cytosine within CpG dinucleotides. In addition, binds specifically methylated m(5)CpNpN but not m(5)CpNpG (N is A, T or C). Plays probably a role in gene silencing. The protein is Methyl-CpG-binding domain-containing protein 5 (MBD5) of Arabidopsis thaliana (Mouse-ear cress).